Reading from the N-terminus, the 314-residue chain is Probable cell division protein WhiA (314 aa).

The segment at residues serine 274 to alanine 305 is a DNA-binding region (H-T-H motif).

It belongs to the WhiA family.

Its function is as follows. Involved in cell division and chromosome segregation. The sequence is that of Probable cell division protein WhiA from Leuconostoc citreum (strain KM20).